Consider the following 428-residue polypeptide: MYKEPFQPTYEYALECDKHDELKDFQSEFYKKEGTIYLDGNSLGLLSKRAEKSLLTLLDSWKEFGIDGWTEGEHPWFFLSEKLGELTAPLIGSLPEETIVTSSTTANIHQVIATFYEPKGIRTKILADELTFPSDIYALQSQIRLKGLDPDEHLVRVKSRDGRTLSEDDIIHAMTDDIALILLPSVLYRSGQILDMKRLTAEAHKRGIHIGFDLCHSIGSIPHHFKEWDVDFAVWCNYKYLNAGPGGVAGLYVNNKHFNRLPGLSGWFSSRKDKQFDMEHSLTAADHAGAYQIGTPHVLSTAPLIGSLEIFKEAGIEKLREKSLHITRYMLDLIEHELKGFEFTIGNPLEDEKRGGHIYLEHAEAARICKALKANGVIPDFRAPNGVRLAPVALYNTYEEVWNYVQILKKIMKNEEYKNFENKREVVA.

Pyridoxal 5'-phosphate contacts are provided by residues Thr-104, Thr-105, 132–135, Asp-213, His-216, and Tyr-238; that span reads FPSD. Lys-239 carries the N6-(pyridoxal phosphate)lysine modification. Pyridoxal 5'-phosphate contacts are provided by Trp-267 and Thr-295.

The protein belongs to the kynureninase family. In terms of assembly, homodimer. It depends on pyridoxal 5'-phosphate as a cofactor.

The enzyme catalyses L-kynurenine + H2O = anthranilate + L-alanine + H(+). The catalysed reaction is 3-hydroxy-L-kynurenine + H2O = 3-hydroxyanthranilate + L-alanine + H(+). The protein operates within amino-acid degradation; L-kynurenine degradation; L-alanine and anthranilate from L-kynurenine: step 1/1. It functions in the pathway cofactor biosynthesis; NAD(+) biosynthesis; quinolinate from L-kynurenine: step 2/3. Catalyzes the cleavage of L-kynurenine (L-Kyn) and L-3-hydroxykynurenine (L-3OHKyn) into anthranilic acid (AA) and 3-hydroxyanthranilic acid (3-OHAA), respectively. The polypeptide is Kynureninase (Bacillus mycoides (strain KBAB4) (Bacillus weihenstephanensis)).